The chain runs to 78 residues: Large ribosomal subunit protein bL28 (78 aa).

The segment at 1–26 is disordered; sequence MSAYCQVTGRKPSFGKSVSHSHRRTN.

Belongs to the bacterial ribosomal protein bL28 family.

This is Large ribosomal subunit protein bL28 from Corynebacterium jeikeium (strain K411).